The primary structure comprises 219 residues: MIYLVGTPLGNLEDITLRAIRVLGEADVVACESKERALKLLSHLQIKKPLIYLREASRASDVKRIIELHKQGKTVAVTTDAGMPGISDPGAYLVRELSAQGIPFTVVPGPSALCMSITVSGLEEPWAFLGFLPLKEGKRRRELEKFLPLNIGLVIYEGPHRVGKLLSLLNELCPQRKVALLRELTKLHEEVQVGYPHELIKDSYKGEFVVVVYPSQEGT.

Belongs to the methyltransferase superfamily. RsmI family.

Its subcellular location is the cytoplasm. The catalysed reaction is cytidine(1402) in 16S rRNA + S-adenosyl-L-methionine = 2'-O-methylcytidine(1402) in 16S rRNA + S-adenosyl-L-homocysteine + H(+). Functionally, catalyzes the 2'-O-methylation of the ribose of cytidine 1402 (C1402) in 16S rRNA. The chain is Ribosomal RNA small subunit methyltransferase I from Coprothermobacter proteolyticus (strain ATCC 35245 / DSM 5265 / OCM 4 / BT).